Reading from the N-terminus, the 83-residue chain is Protein Vpr (83 aa).

Ser79 carries the post-translational modification Phosphoserine; by host.

As to quaternary structure, interacts with human UNG.

The protein resides in the virion. It localises to the host nucleus. Stimulates gene expression driven by the HIV-2 LTR. Prevents infected cells from undergoing mitosis and proliferating, by inducing arrest or delay in the G2 phase of the cell cycle. Cell cycle arrest creates a favorable environment for maximizing viral expression and production. The protein is Protein Vpr of Pan troglodytes (Chimpanzee).